A 548-amino-acid chain; its full sequence is Natural resistance-associated macrophage protein 1 (548 aa).

Residues 1 to 11 (MSGDTGPSKQG) are compositionally biased toward polar residues. Positions 1 to 38 (MSGDTGPSKQGGTRYGSISSPPSPGPQQAPPGGTYLGE) are disordered. Residues 1 to 55 (MSGDTGPSKQGGTRYGSISSPPSPGPQQAPPGGTYLGEKIPIPDTESGAFSLRKL) lie on the Cytoplasmic side of the membrane. The helical transmembrane segment at 56–73 (WAFTGPGFLMSIAFLDPG) threads the bilayer. Over 74–82 (NIESDLQAG) the chain is Extracellular. A helical membrane pass occupies residues 83 to 102 (AVAGFKLLWVLLWATVLGLL). The Cytoplasmic segment spans residues 103 to 139 (CQRLAARLGVVTGKDLGEVCHLYYPKVPRILLWLTIE). A helical transmembrane segment spans residues 140 to 160 (LAIVGSDMQEVIGTAIAFSLL). The Extracellular segment spans residues 161-164 (SAGR). The chain crosses the membrane as a helical span at residues 165-184 (IPLWGGVLITVVDTFFFLFL). Over 185–193 (DNYGLRKLE) the chain is Cytoplasmic. Residues 194 to 214 (AFFGFLITIMALTFGYEYVVA) traverse the membrane as a helical segment. Over 215–237 (QPAQGALLQGLFLPSCRGCGQPE) the chain is Extracellular. The helical transmembrane segment at 238 to 256 (LLQAVGIIGAIIMPHNIYL) threads the bilayer. The Cytoplasmic segment spans residues 257–284 (HSSLVKSREVDRSRRADIREANMYFLIE). A helical transmembrane segment spans residues 285–304 (ATIALSVSFLINLFVMAVFG). The Extracellular portion of the chain corresponds to 305–346 (QAFYKQTNQAAFNICAKSSLHDYAPIFPRNNLTVAVDIYQGG). Asparagine 335 is a glycosylation site (N-linked (GlcNAc...) asparagine). Residues 347-366 (VILGCLFGPAALYIWAVGLL) traverse the membrane as a helical segment. The Cytoplasmic segment spans residues 367–397 (AAGQSSTMTGTYAGQFVMEGFLKLRWSRFAR). Residues 398-415 (VLLTRSCAILPTVLLAVF) form a helical membrane-spanning segment. The Extracellular segment spans residues 416 to 426 (RDLRDLSGLND). A helical membrane pass occupies residues 427–447 (LLNVLQSLLLPFAVLPILTFT). Topologically, residues 448–463 (SMPALMQEFANGLVSK) are cytoplasmic. A helical transmembrane segment spans residues 464–485 (VITSSIMVLVCAVNLYFVISYV). Residues 486–493 (PSLPHPAY) are Extracellular-facing. Residues 494-513 (FSLVALLAAAYLGLTTYLVW) traverse the membrane as a helical segment. Topologically, residues 514 to 548 (TCLITQGATFLAHNSHQRFLYGLPEEDQEKGRTSG) are cytoplasmic.

It belongs to the NRAMP family.

It localises to the late endosome membrane. The protein resides in the lysosome membrane. The catalysed reaction is Zn(2+)(in) + H(+)(out) = Zn(2+)(out) + H(+)(in). The enzyme catalyses Fe(2+)(in) + H(+)(out) = Fe(2+)(out) + H(+)(in). It carries out the reaction Mn(2+)(in) + H(+)(out) = Mn(2+)(out) + H(+)(in). In terms of biological role, macrophage-specific antiporter that fluxes metal ions in either direction against a proton gradient. Localized to late endosomal lysosomal membranes, delivers bivalent cations from the cytosol into these acidic compartments where they may directly affect antimicrobial activity. Involved in iron metabolism and host natural resistance to infection with intracellular parasites. Pathogen resistance involves sequestration of Fe(2+) and Mn(2+), cofactors of both prokaryotic and eukaryotic catalases and superoxide dismutases, not only to protect the macrophage against its own generation of reactive oxygen species, but to deny the cations to the pathogen for synthesis of its protective enzymes. The chain is Natural resistance-associated macrophage protein 1 (SLC11A1) from Bubalus bubalis (Domestic water buffalo).